A 516-amino-acid polypeptide reads, in one-letter code: Probable serine/threonine-protein kinase DDB_G0293276 (516 aa).

Residues 69 to 115 are disordered; it reads SIEIDDENPYNTNNNNNSNNNNNNNNNNCNNSNNSNNNKNINSLDNI. Residues 79 to 115 show a composition bias toward low complexity; it reads NTNNNNNSNNNNNNNNNNCNNSNNSNNNKNINSLDNI. In terms of domain architecture, Protein kinase spans 232 to 479; the sequence is YKHVECIGKG…SKDIKNHPYF (248 aa). ATP-binding positions include 238 to 246 and Lys-261; that span reads IGKGGYGVV. Asp-350 serves as the catalytic Proton acceptor.

The protein belongs to the protein kinase superfamily. AGC Ser/Thr protein kinase family.

It catalyses the reaction L-seryl-[protein] + ATP = O-phospho-L-seryl-[protein] + ADP + H(+). It carries out the reaction L-threonyl-[protein] + ATP = O-phospho-L-threonyl-[protein] + ADP + H(+). This Dictyostelium discoideum (Social amoeba) protein is Probable serine/threonine-protein kinase DDB_G0293276.